Reading from the N-terminus, the 196-residue chain is RNA annealing protein YRA2 (196 aa).

Disordered stretches follow at residues 1 to 63 and 143 to 196; these read MSVD…PTHQ and DSTR…MNGN. Residues 63-137 form the RRM domain; the sequence is QRVRFLNIPL…AKITVEIFEQ (75 aa). The span at 149 to 159 shows a compositional bias: basic and acidic residues; it reads RSTDHVEKEAG.

This sequence belongs to the YRA1 family. Associates with mRNPs.

The protein localises to the nucleus. In terms of biological role, involved in export of poly(A) mRNAs from the nucleus. Recruited to the coding sequences as well as poly-A sites of active genes. This chain is RNA annealing protein YRA2 (YRA2), found in Eremothecium gossypii (strain ATCC 10895 / CBS 109.51 / FGSC 9923 / NRRL Y-1056) (Yeast).